The primary structure comprises 580 residues: Pescadillo homolog (580 aa).

Residues 291 to 303 (EPEEENEVDEFPA) are compositionally biased toward acidic residues. The interval 291 to 321 (EPEEENEVDEFPADPENAGQEEEQKKQLQEE) is disordered. Over residues 312-321 (EEQKKQLQEE) the composition is skewed to basic and acidic residues. In terms of domain architecture, BRCT spans 323-416 (KHKSMFVGLK…MLLPVEDYFP (94 aa)). The tract at residues 448–496 (KGENPEDDDDDDEEDDEDEEEDDEDEDDEENEEEEEDKKLRHLENKKVG) is disordered. Over residues 452–483 (PEDDDDDDEEDDEDEEEDDEDEDDEENEEEEE) the composition is skewed to acidic residues. Residues 484–494 (DKKLRHLENKK) show a composition bias toward basic and acidic residues.

It belongs to the pescadillo family. Component of the PeBoW complex, composed of bop1, pes1 and wdr12. The complex is held together by bop1, which interacts with pes1 via its N-terminal domain and with wdr12 via a high-affinity interaction between the seven-bladed beta-propeller domains of the 2 proteins. The PeBoW complex associates with the 66S pre-ribosome.

It localises to the nucleus. The protein localises to the nucleolus. It is found in the nucleoplasm. Its function is as follows. Component of the PeBoW complex, which is required for maturation of 28S and 5.8S ribosomal RNAs and formation of the 60S ribosome. The sequence is that of Pescadillo homolog (pes1) from Xenopus tropicalis (Western clawed frog).